Reading from the N-terminus, the 526-residue chain is uncharacterized protein (526 aa).

WD repeat units follow at residues 210 to 248 and 452 to 491; these read SMEQ…HHDT and SHNS…LIDS.

This is an uncharacterized protein from Acanthamoeba polyphaga mimivirus (APMV).